A 611-amino-acid chain; its full sequence is Mitochondrial import receptor subunit TOM70 (611 aa).

Alanine 2 bears the N-acetylalanine mark. The Mitochondrial intermembrane segment spans residues 2–41 (AASKPIEAAMAAAAAPGSGNGVGGGGGTAGPGSGAGTLPR). A helical transmembrane segment spans residues 42–62 (WHVALAIGAPLLLGAGAMYLW). Residues 63 to 611 (SRRRRRREAG…KKYGLKPPTL (549 aa)) are Cytoplasmic-facing. Residues 69–110 (REAGGRGDASGLKRNSERKTPEGRASPALGSGHHDGSGDSLE) are disordered. An Omega-N-methylarginine modification is found at arginine 74. 5 positions are modified to phosphoserine: serine 94, serine 99, serine 105, serine 108, and serine 113. 2 TPR repeats span residues 117 to 150 (AQAAKNKGNKYFKAGKYEQAIQCYTEAISLCPTE) and 156 to 189 (STFYQNRAAAFEQLQKWKEVAQDCTKAVELNPKY). N6-acetyllysine is present on lysine 188. A Glycyl lysine isopeptide (Lys-Gly) (interchain with G-Cter in SUMO2) cross-link involves residue lysine 278. 8 TPR repeats span residues 297 to 330 (ENSGYLKAKQYMEEENYDKIISECSKEIDAQGKY), 332 to 365 (AEALLLRATFYLLIGSANAAKPDLDKVISLKEAN), 370 to 403 (ANALIKRGTMCMQQQQPMLSTQDFNMAAEIDPMN), 404 to 437 (SDVYHHRGQLKILLDLVEEAVADFDACIRLRPKF), 445 to 478 (CFALYRQAYTANNSSQVQAAMKGFEEIIKKFPRC), 479 to 512 (AEGYALYAQALTDQQQFGKADEMYDKCIDLEPDN), 514 to 547 (TTYVHKGLLQLQWKQDLDKGLELISKAIEIDNKC), and 548 to 581 (DFAYETMGTIEVQRGNMEKAIDMFNKAINLAKSE).

This sequence belongs to the Tom70 family. Forms part of the preprotein translocase complex of the outer mitochondrial membrane (TOM complex) which consists of at least 7 different proteins (TOMM5, TOMM6, TOMM7, TOMM20, TOMM22, TOMM40 and TOMM70). Interacts with CAPN8. Interacts with TRADD, TRAF6 and STING. Interacts with MAVS. Interacts with HSPA8 and HSP90AA1; both interactions are required for preprotein mitochondrial import. The interaction with HSP90AA1 is direct and mediates the association of TOMM70 with IRF3 and TBK1. Upon mitochondrial depolarization, interacts with PINK1; the interaction is required for PINK1-TOM-TIM23 supercomplex formation which is critical for PINK1 stabilization at the outer mitochondrial membrane, kinase activation and downstream mitophagy. As to expression, expressed in the base region of the oxyntic and pyloric mucosae.

It localises to the mitochondrion outer membrane. Functionally, acts as a receptor of the preprotein translocase complex of the outer mitochondrial membrane (TOM complex). Recognizes and mediates the translocation of mitochondrial preproteins from the cytosol into the mitochondria in a chaperone dependent manner. Mediates TBK1 and IRF3 activation induced by MAVS in response to virus infection and promotes host antiviral responses during virus infection. The chain is Mitochondrial import receptor subunit TOM70 from Mus musculus (Mouse).